The sequence spans 5087 residues: Nonribosomal peptide synthetase sidC (5087 aa).

An adenylation 1 region spans residues 165–563; that stretch reads HEMVRHTGNE…NGELQCMGRI (399 aa). The 74-residue stretch at 671–744 folds into the Carrier 1 domain; sequence EPAGDIEQKI…KMAALVLKSQ (74 aa). Ser705 bears the O-(pantetheine 4'-phosphoryl)serine mark. The condensation 1 stretch occupies residues 782-1112; sequence DIIPCSPIQT…LFDTLFVWQD (331 aa). Residues 1217-1611 form an adenylation 2 region; the sequence is ELAKTDSERI…GRRDDLVKIR (395 aa). The Carrier 2 domain occupies 1740–1817; it reads ENLTDNEAKV…RLTRKISQSI (78 aa). At Ser1777 the chain carries O-(pantetheine 4'-phosphoryl)serine. The interval 1855-2272 is condensation 2; that stretch reads KILPCTSLQE…RVMDFSLVES (418 aa). The region spanning 2302 to 2378 is the Carrier 3 domain; it reads EEWSAESLEI…EIASVLQGSK (77 aa). Ser2339 carries the post-translational modification O-(pantetheine 4'-phosphoryl)serine. Positions 2419–2831 are condensation 3; that stretch reads PCTTPQAGML…STSSSLDTAS (413 aa). The tract at residues 2860-3258 is adenylation 3; it reads ATRHPSRVAL…GRIDDQVKLR (399 aa). One can recognise a Carrier 4 domain in the interval 3387 to 3464; the sequence is TEDTDTIRKI…LLAKAVESPD (78 aa). Position 3424 is an O-(pantetheine 4'-phosphoryl)serine (Ser3424). The segment at 3506-3910 is condensation 4; sequence ITPCTSLQDG…RSLVEEPFSN (405 aa). In terms of domain architecture, Carrier 5 spans 3943 to 4019; that stretch reads FQWSQAASLL…TMMAEVTVNG (77 aa). Ser3980 bears the O-(pantetheine 4'-phosphoryl)serine mark. The tract at residues 4051-4416 is condensation 5; that stretch reads EHIYPATPLQ…EYSICVELEA (366 aa). The Carrier 6 domain maps to 4496-4569; sequence SLLEERIRDT…KMAEIVNSAR (74 aa). The residue at position 4530 (Ser4530) is an O-(pantetheine 4'-phosphoryl)serine. Residues 4610–4913 are condensation 6; it reads FLPATAGQVY…IQSDLHEIGS (304 aa). Positions 5013–5048 are disordered; the sequence is DVYKVSPPGSQLSQDSPEKQEANNKPSPQPSVDIEA.

The protein belongs to the NRP synthetase family.

It functions in the pathway siderophore biosynthesis. In terms of biological role, nonribosomal peptide synthetase; part of the siderophore biosynthetic pathway. Arthroderma benhamiae produces 2 types of extracellular siderophores, ferrichrome C and ferricrocin. The biosynthesis of these siderophores depends on the hydroxylation of ornithine to N(5)-hydroxyornithine, catalyzed by the monooxygenase sidA. The structure of ferricrocin differs from ferrichrome C only by a serine for alanine substitution and the assembly of both siderophores is suggested to be performed by the nonribosomal peptide synthase (NRPS) sidC. This chain is Nonribosomal peptide synthetase sidC, found in Arthroderma benhamiae (strain ATCC MYA-4681 / CBS 112371) (Trichophyton mentagrophytes).